We begin with the raw amino-acid sequence, 320 residues long: NAC domain-containing protein 18 (320 aa).

The segment at 1-22 is disordered; the sequence is MESTDSSGGPPPPQPNLPPGFR. Over residues 9-18 the composition is skewed to pro residues; sequence GPPPPQPNLP. The region spanning 17–177 is the NAC domain; sequence LPPGFRFHPT…DWVLCRIYKK (161 aa). Residues 118–183 mediate DNA binding; sequence VGVKKALVFY…IYKKNNSTAS (66 aa).

Restricted primarily to the region of the embryo including the SAM. Expressed in the outer integument, but seems not expressed in the embryo at the torpedo stage.

The protein localises to the nucleus. Its function is as follows. May encode a transcription factor involved in the elaboration of shoot apical meristems (SAM). Together with NAC056/NARS1, regulates embryogenesis by regulating the development and degeneration of ovule integuments, a process required for intertissue communication between the embryo and the maternal integument. In Arabidopsis thaliana (Mouse-ear cress), this protein is NAC domain-containing protein 18 (NAC018).